A 22-amino-acid chain; its full sequence is 2.39 kDa venom peptide (22 aa).

In terms of processing, contains 2 disulfide bonds. In terms of tissue distribution, expressed by the venom gland.

The protein localises to the secreted. In terms of biological role, not lethal to mice by intraperitoneal or intracerebroventricular injections in doses up to 100 micrograms. This is 2.39 kDa venom peptide from Heterometrus spinifer (Asia giant forest scorpion).